A 381-amino-acid polypeptide reads, in one-letter code: cAMP-dependent protein kinase type I-beta regulatory subunit (381 aa).

Positions 1–136 (MASPSCFHSE…ALAKAISKNV (136 aa)) are dimerization and phosphorylation. At Ser-3 the chain carries Phosphoserine. The residue at position 21 (Tyr-21) is a 3'-nitrotyrosine. Residues 66–88 (LARQKSNSQCDSHDEEISPTPPN) form a disordered region. A phosphoserine mark is found at Ser-77 and Ser-83. Position 85 is a phosphothreonine (Thr-85). The short motif at 96–100 (RRGGV) is the Pseudophosphorylation motif element. The residue at position 97 (Arg-97) is an Omega-N-methylarginine. 3',5'-cyclic AMP-binding positions include 137 to 254 (LFSH…SKVS), Glu-202, Arg-211, 255 to 381 (ILES…SLTV), Glu-326, and Arg-335.

This sequence belongs to the cAMP-dependent kinase regulatory chain family. The inactive holoenzyme is composed of two regulatory chains and two catalytic chains. Activation by cAMP releases the two active catalytic monomers and the regulatory dimer. Interacts with PRKX; regulates this cAMP-dependent protein kinase. Interacts with smAKAP; this interaction may target PRKAR1B to the plasma membrane. The pseudophosphorylation site binds to the substrate-binding region of the catalytic chain, resulting in the inhibition of its activity. As to expression, abundant in brain and testis. No expression in lung, heart, liver, spleen, kidney and skeletal muscle.

It localises to the cell membrane. Functionally, regulatory subunit of the cAMP-dependent protein kinases involved in cAMP signaling in cells. The polypeptide is cAMP-dependent protein kinase type I-beta regulatory subunit (Prkar1b) (Rattus norvegicus (Rat)).